The sequence spans 99 residues: Large ribosomal subunit protein uL23 (99 aa).

The protein belongs to the universal ribosomal protein uL23 family. As to quaternary structure, part of the 50S ribosomal subunit. Contacts protein L29, and trigger factor when it is bound to the ribosome.

In terms of biological role, one of the early assembly proteins it binds 23S rRNA. One of the proteins that surrounds the polypeptide exit tunnel on the outside of the ribosome. Forms the main docking site for trigger factor binding to the ribosome. In Pseudomonas fluorescens (strain SBW25), this protein is Large ribosomal subunit protein uL23.